The primary structure comprises 337 residues: tRNA N6-adenosine threonylcarbamoyltransferase (337 aa).

Fe cation contacts are provided by histidine 107 and histidine 111. Residues 129-133 (LISGG), aspartate 162, glycine 175, and asparagine 271 each bind substrate. Aspartate 299 provides a ligand contact to Fe cation.

This sequence belongs to the KAE1 / TsaD family. It depends on Fe(2+) as a cofactor.

The protein localises to the cytoplasm. It catalyses the reaction L-threonylcarbamoyladenylate + adenosine(37) in tRNA = N(6)-L-threonylcarbamoyladenosine(37) in tRNA + AMP + H(+). Functionally, required for the formation of a threonylcarbamoyl group on adenosine at position 37 (t(6)A37) in tRNAs that read codons beginning with adenine. Is involved in the transfer of the threonylcarbamoyl moiety of threonylcarbamoyl-AMP (TC-AMP) to the N6 group of A37, together with TsaE and TsaB. TsaD likely plays a direct catalytic role in this reaction. The chain is tRNA N6-adenosine threonylcarbamoyltransferase from Sulfurovum sp. (strain NBC37-1).